A 201-amino-acid polypeptide reads, in one-letter code: Small ribosomal subunit protein uS4c (201 aa).

The tract at residues Gly-20 to Gly-39 is disordered. In terms of domain architecture, S4 RNA-binding spans Met-89–Asn-150.

Belongs to the universal ribosomal protein uS4 family. In terms of assembly, part of the 30S ribosomal subunit. Contacts protein S5. The interaction surface between S4 and S5 is involved in control of translational fidelity.

The protein localises to the plastid. The protein resides in the chloroplast. In terms of biological role, one of the primary rRNA binding proteins, it binds directly to 16S rRNA where it nucleates assembly of the body of the 30S subunit. With S5 and S12 plays an important role in translational accuracy. In Oryza nivara (Indian wild rice), this protein is Small ribosomal subunit protein uS4c (rps4).